Consider the following 145-residue polypeptide: 3-hydroxyacyl-[acyl-carrier-protein] dehydratase FabZ (145 aa).

H49 is an active-site residue.

Belongs to the thioester dehydratase family. FabZ subfamily.

Its subcellular location is the cytoplasm. The enzyme catalyses a (3R)-hydroxyacyl-[ACP] = a (2E)-enoyl-[ACP] + H2O. Involved in unsaturated fatty acids biosynthesis. Catalyzes the dehydration of short chain beta-hydroxyacyl-ACPs and long chain saturated and unsaturated beta-hydroxyacyl-ACPs. In Rickettsia typhi (strain ATCC VR-144 / Wilmington), this protein is 3-hydroxyacyl-[acyl-carrier-protein] dehydratase FabZ.